The sequence spans 213 residues: ATP phosphoribosyltransferase (213 aa).

The protein belongs to the ATP phosphoribosyltransferase family. Short subfamily. Heteromultimer composed of HisG and HisZ subunits.

Its subcellular location is the cytoplasm. The catalysed reaction is 1-(5-phospho-beta-D-ribosyl)-ATP + diphosphate = 5-phospho-alpha-D-ribose 1-diphosphate + ATP. It participates in amino-acid biosynthesis; L-histidine biosynthesis; L-histidine from 5-phospho-alpha-D-ribose 1-diphosphate: step 1/9. Catalyzes the condensation of ATP and 5-phosphoribose 1-diphosphate to form N'-(5'-phosphoribosyl)-ATP (PR-ATP). Has a crucial role in the pathway because the rate of histidine biosynthesis seems to be controlled primarily by regulation of HisG enzymatic activity. The sequence is that of ATP phosphoribosyltransferase from Chromobacterium violaceum (strain ATCC 12472 / DSM 30191 / JCM 1249 / CCUG 213 / NBRC 12614 / NCIMB 9131 / NCTC 9757 / MK).